The sequence spans 302 residues: Glutamate/aspartate import solute-binding protein (302 aa).

The N-terminal stretch at 1-22 (MQLRKLTTAMLVMGLSAGLAHA) is a signal peptide.

Belongs to the bacterial solute-binding protein 3 family. In terms of assembly, the complex is composed of two ATP-binding proteins (GltL), two transmembrane proteins (GltJ and GltK) and a solute-binding protein (GltI).

The protein localises to the periplasm. Its function is as follows. Part of the ABC transporter complex GltIJKL involved in glutamate and aspartate uptake. Binds to both glutamate and aspartate. The polypeptide is Glutamate/aspartate import solute-binding protein (gltI) (Salmonella typhimurium (strain LT2 / SGSC1412 / ATCC 700720)).